A 614-amino-acid chain; its full sequence is Acetylcholinesterase (614 aa).

The signal sequence occupies residues 1–31 (MRPPWYPLHTPSLAFPLLFLLLSLLGGGARA). Cys-100 and Cys-127 form a disulfide bridge. Catalysis depends on Ser-234, which acts as the Acyl-ester intermediate. Cys-288 and Cys-303 are disulfide-bonded. Asn-296 carries N-linked (GlcNAc...) asparagine glycosylation. The active-site Charge relay system is Glu-365. Residue Asn-381 is glycosylated (N-linked (GlcNAc...) asparagine). An intrachain disulfide couples Cys-440 to Cys-560. His-478 acts as the Charge relay system in catalysis. An N-linked (GlcNAc...) asparagine glycan is attached at Asn-495.

The protein belongs to the type-B carboxylesterase/lipase family. In terms of assembly, isoform H generates GPI-anchored dimers; disulfide linked. Isoform T generates multiple structures, ranging from monomers and dimers to collagen-tailed and hydrophobic-tailed forms, in which catalytic tetramers are associated with anchoring proteins that attach them to the basal lamina or to cell membranes. In the collagen-tailed forms, isoform T subunits are associated with a specific collagen, COLQ, which triggers the formation of isoform T tetramers, from monomers and dimers. Interacts with PRIMA1. The interaction with PRIMA1 is required to anchor it to the basal lamina of cells and organize into tetramers. Predominates in most expressing tissues except erythrocytes where a glycophospholipid-attached form of ACHE predominates.

The protein resides in the synapse. The protein localises to the secreted. Its subcellular location is the cell membrane. The catalysed reaction is acetylcholine + H2O = choline + acetate + H(+). Terminates signal transduction at the neuromuscular junction by rapid hydrolysis of the acetylcholine released into the synaptic cleft. This is Acetylcholinesterase (Ache) from Mus musculus (Mouse).